Consider the following 379-residue polypeptide: Inactive deoxyhypusine synthase (379 aa).

The segment at 1–48 is disordered; the sequence is MLASVPAPRPAKKDSAASRRKSASKSTGAAVKDGSSARVSASGAAESP. A compositionally biased stretch (low complexity) spans 36–47; sequence SARVSASGAAES. Residues 115-119, 141-143, Glu147, and Asp256 each bind NAD(+); these read SNMIS and SAG. 146 to 147 serves as a coordination point for spermidine; it reads EE. Residue Asp261 coordinates spermidine. Gly302 contributes to the NAD(+) binding site. Position 307 (His307) interacts with spermidine. Position 323–324 (323–324) interacts with NAD(+); it reads TG. Spermidine is bound by residues 329–331 and 338–344; these read GCV and DDVACGL. 357–358 is an NAD(+) binding site; it reads DA.

It belongs to the deoxyhypusine synthase family.

This is Inactive deoxyhypusine synthase from Leishmania donovani.